We begin with the raw amino-acid sequence, 104 residues long: Large ribosomal subunit protein bL21 (104 aa).

This sequence belongs to the bacterial ribosomal protein bL21 family. As to quaternary structure, part of the 50S ribosomal subunit. Contacts protein L20.

This protein binds to 23S rRNA in the presence of protein L20. This Lactococcus lactis subsp. lactis (strain IL1403) (Streptococcus lactis) protein is Large ribosomal subunit protein bL21.